The following is a 156-amino-acid chain: Transcriptional repressor NrdR (156 aa).

A zinc finger lies at 3 to 34 (CPYCGETEDKVIDSRQGKEADVIRRRRECLSC). The 91-residue stretch at 49–139 (LVIIKKDGRR…VYREFKHVND (91 aa)) folds into the ATP-cone domain.

Belongs to the NrdR family. Zn(2+) serves as cofactor.

Functionally, negatively regulates transcription of bacterial ribonucleotide reductase nrd genes and operons by binding to NrdR-boxes. The chain is Transcriptional repressor NrdR from Desulfatibacillum aliphaticivorans.